The sequence spans 268 residues: Ribosomal RNA small subunit methyltransferase A (268 aa).

S-adenosyl-L-methionine-binding residues include N18, L20, G45, E66, D91, and N112.

The protein belongs to the class I-like SAM-binding methyltransferase superfamily. rRNA adenine N(6)-methyltransferase family. RsmA subfamily.

Its subcellular location is the cytoplasm. The enzyme catalyses adenosine(1518)/adenosine(1519) in 16S rRNA + 4 S-adenosyl-L-methionine = N(6)-dimethyladenosine(1518)/N(6)-dimethyladenosine(1519) in 16S rRNA + 4 S-adenosyl-L-homocysteine + 4 H(+). Specifically dimethylates two adjacent adenosines (A1518 and A1519) in the loop of a conserved hairpin near the 3'-end of 16S rRNA in the 30S particle. May play a critical role in biogenesis of 30S subunits. This chain is Ribosomal RNA small subunit methyltransferase A, found in Shewanella oneidensis (strain ATCC 700550 / JCM 31522 / CIP 106686 / LMG 19005 / NCIMB 14063 / MR-1).